The following is a 1154-amino-acid chain: uncharacterized protein (1154 aa).

Positions 1–18 (MKRNIFIKLLISLLLLSS) are cleaved as a signal peptide. The N-palmitoyl cysteine moiety is linked to residue Cys-19. The S-diacylglycerol cysteine moiety is linked to residue Cys-19. Transmembrane regions (helical) follow at residues 288-308 (ISVS…FLIG), 394-414 (LGFI…FLIF), 423-443 (ALIT…FMLF), and 458-478 (ISYA…SMII).

The protein belongs to the TrbL/VirB6 family.

Its subcellular location is the cell membrane. This is an uncharacterized protein from Rickettsia typhi (strain ATCC VR-144 / Wilmington).